Reading from the N-terminus, the 675-residue chain is UvrABC system protein B (675 aa).

A Helicase ATP-binding domain is found at 32 to 417 (EGLSDGLAYQ…EHAGQVVEQV (386 aa)). Position 45–52 (45–52 (GVTGSGKT)) interacts with ATP. The Beta-hairpin signature appears at 98–121 (YYDYYQPEAYVPSRDLFIEKDSAI). The Helicase C-terminal domain occupies 436–602 (QVDDLMSEIN…QIKKQVKDII (167 aa)). Residues 634 to 669 (IKEIAKLEKAMQQAARDLQFEEAAVLRDRIRNIKEN) enclose the UVR domain.

The protein belongs to the UvrB family. In terms of assembly, forms a heterotetramer with UvrA during the search for lesions. Interacts with UvrC in an incision complex.

The protein localises to the cytoplasm. Functionally, the UvrABC repair system catalyzes the recognition and processing of DNA lesions. A damage recognition complex composed of 2 UvrA and 2 UvrB subunits scans DNA for abnormalities. Upon binding of the UvrA(2)B(2) complex to a putative damaged site, the DNA wraps around one UvrB monomer. DNA wrap is dependent on ATP binding by UvrB and probably causes local melting of the DNA helix, facilitating insertion of UvrB beta-hairpin between the DNA strands. Then UvrB probes one DNA strand for the presence of a lesion. If a lesion is found the UvrA subunits dissociate and the UvrB-DNA preincision complex is formed. This complex is subsequently bound by UvrC and the second UvrB is released. If no lesion is found, the DNA wraps around the other UvrB subunit that will check the other stand for damage. The chain is UvrABC system protein B from Neisseria meningitidis serogroup A / serotype 4A (strain DSM 15465 / Z2491).